Consider the following 314-residue polypeptide: Thymidylate synthase (314 aa).

DUMP-binding positions include Arg-21 and 176-177; that span reads RR. Cys-196 functions as the Nucleophile in the catalytic mechanism. DUMP-binding positions include 216–219, Asn-227, and 257–259; these read RSAD and HLY. Position 219 (Asp-219) interacts with (6R)-5,10-methylene-5,6,7,8-tetrahydrofolate. Position 313 (Ser-313) interacts with (6R)-5,10-methylene-5,6,7,8-tetrahydrofolate.

Belongs to the thymidylate synthase family. Bacterial-type ThyA subfamily. Homodimer.

It is found in the cytoplasm. It carries out the reaction dUMP + (6R)-5,10-methylene-5,6,7,8-tetrahydrofolate = 7,8-dihydrofolate + dTMP. It participates in pyrimidine metabolism; dTTP biosynthesis. Catalyzes the reductive methylation of 2'-deoxyuridine-5'-monophosphate (dUMP) to 2'-deoxythymidine-5'-monophosphate (dTMP) while utilizing 5,10-methylenetetrahydrofolate (mTHF) as the methyl donor and reductant in the reaction, yielding dihydrofolate (DHF) as a by-product. This enzymatic reaction provides an intracellular de novo source of dTMP, an essential precursor for DNA biosynthesis. This chain is Thymidylate synthase, found in Listeria monocytogenes serotype 4b (strain CLIP80459).